Consider the following 170-residue polypeptide: Peptide deformylase (170 aa).

The Fe cation site is built by cysteine 91 and histidine 133. Glutamate 134 is a catalytic residue. Histidine 137 is a binding site for Fe cation.

The protein belongs to the polypeptide deformylase family. Fe(2+) is required as a cofactor.

It catalyses the reaction N-terminal N-formyl-L-methionyl-[peptide] + H2O = N-terminal L-methionyl-[peptide] + formate. In terms of biological role, removes the formyl group from the N-terminal Met of newly synthesized proteins. Requires at least a dipeptide for an efficient rate of reaction. N-terminal L-methionine is a prerequisite for activity but the enzyme has broad specificity at other positions. The chain is Peptide deformylase from Yersinia enterocolitica serotype O:8 / biotype 1B (strain NCTC 13174 / 8081).